A 543-amino-acid chain; its full sequence is 2,3-bisphosphoglycerate-independent phosphoglycerate mutase (543 aa).

Residues Asp20 and Ser73 each contribute to the Mn(2+) site. Ser73 functions as the Phosphoserine intermediate in the catalytic mechanism. Substrate is bound by residues His134, 166–167 (RD), Arg198, Arg204, 278–281 (RGDR), and Lys360. Mn(2+) contacts are provided by Asp428, His432, Asp469, His470, and His488.

This sequence belongs to the BPG-independent phosphoglycerate mutase family. In terms of assembly, monomer. Requires Mn(2+) as cofactor.

It carries out the reaction (2R)-2-phosphoglycerate = (2R)-3-phosphoglycerate. The protein operates within carbohydrate degradation; glycolysis; pyruvate from D-glyceraldehyde 3-phosphate: step 3/5. In terms of biological role, catalyzes the interconversion of 2-phosphoglycerate and 3-phosphoglycerate. The polypeptide is 2,3-bisphosphoglycerate-independent phosphoglycerate mutase (Rhodopirellula baltica (strain DSM 10527 / NCIMB 13988 / SH1)).